We begin with the raw amino-acid sequence, 618 residues long: DNA mismatch repair protein MutL (618 aa).

Over residues 367–381 (EPTAAREPATPRYSG) the composition is skewed to low complexity. The tract at residues 367-402 (EPTAAREPATPRYSGGASGGNGGRQSAGGWPHAQPG) is disordered. Residues 382–392 (GASGGNGGRQS) show a composition bias toward gly residues.

The protein belongs to the DNA mismatch repair MutL/HexB family.

Functionally, this protein is involved in the repair of mismatches in DNA. It is required for dam-dependent methyl-directed DNA mismatch repair. May act as a 'molecular matchmaker', a protein that promotes the formation of a stable complex between two or more DNA-binding proteins in an ATP-dependent manner without itself being part of a final effector complex. The chain is DNA mismatch repair protein MutL from Salmonella dublin (strain CT_02021853).